The chain runs to 265 residues: Phosphate import ATP-binding protein PstB 1 (265 aa).

The region spanning 20–260 is the ABC transporter domain; sequence LSTNDLSVLY…PKGKITEDYI (241 aa). Residue 53–60 participates in ATP binding; that stretch reads GASGSGKS.

The protein belongs to the ABC transporter superfamily. Phosphate importer (TC 3.A.1.7) family. As to quaternary structure, the complex is composed of two ATP-binding proteins (PstB), two transmembrane proteins (PstC and PstA) and a solute-binding protein (PstS).

The protein localises to the cell membrane. The catalysed reaction is phosphate(out) + ATP + H2O = ADP + 2 phosphate(in) + H(+). Part of the ABC transporter complex PstSACB involved in phosphate import. Responsible for energy coupling to the transport system. The polypeptide is Phosphate import ATP-binding protein PstB 1 (Lactobacillus acidophilus (strain ATCC 700396 / NCK56 / N2 / NCFM)).